Reading from the N-terminus, the 754-residue chain is Peptidyl-prolyl cis-trans isomerase G (754 aa).

Residues Phe-11–Glu-176 form the PPIase cyclophilin-type domain. The span at Lys-182–Ser-193 shows a compositional bias: basic residues. The disordered stretch occupies residues Lys-182–Gly-754. Over residues Ser-194–Ser-216 the composition is skewed to low complexity. Residues Lys-228–Lys-253 are compositionally biased toward basic residues. Residues Ser-254, Ser-256, Ser-257, Ser-259, and Ser-290 each carry the phosphoserine modification. Over residues Pro-292–Cys-310 the composition is skewed to basic and acidic residues. A Phosphoserine modification is found at Ser-315. Residues Ser-329–Ser-347 are compositionally biased toward basic residues. Composition is skewed to basic and acidic residues over residues Arg-348–Arg-368 and Arg-379–Lys-449. A Phosphoserine modification is found at Ser-356. A Phosphothreonine modification is found at Thr-358. Residue Ser-386 is modified to Phosphoserine. Residue Lys-392 forms a Glycyl lysine isopeptide (Lys-Gly) (interchain with G-Cter in SUMO2) linkage. Phosphoserine is present on residues Ser-397, Ser-413, and Ser-415. The span at Asn-450–Ser-462 shows a compositional bias: basic residues. Composition is skewed to basic and acidic residues over residues Lys-463–Lys-553 and Arg-578–Arg-599. The segment covering Ser-616–Asp-627 has biased composition (basic residues). A compositionally biased stretch (basic and acidic residues) spans Ser-628 to Gln-686. 2 positions are modified to phosphoserine: Ser-687 and Ser-690. The segment covering Ser-687–Asp-698 has biased composition (polar residues). Lys-693 is covalently cross-linked (Glycyl lysine isopeptide (Lys-Gly) (interchain with G-Cter in SUMO2)). Residues Ser-696, Ser-744, and Ser-745 each carry the phosphoserine modification. The segment covering Lys-707–Gly-754 has biased composition (basic and acidic residues). Thr-748 is modified (phosphothreonine). Phosphoserine is present on Ser-753.

Interacts with CLK1, PNN and with the phosphorylated C-terminal domain of RNA polymerase II. In terms of tissue distribution, ubiquitous.

The protein localises to the nucleus matrix. It localises to the nucleus speckle. It catalyses the reaction [protein]-peptidylproline (omega=180) = [protein]-peptidylproline (omega=0). Inhibited by cyclosporin A (CsA). PPIase that catalyzes the cis-trans isomerization of proline imidic peptide bonds in oligopeptides and may therefore assist protein folding. May be implicated in the folding, transport, and assembly of proteins. May play an important role in the regulation of pre-mRNA splicing. The polypeptide is Peptidyl-prolyl cis-trans isomerase G (PPIG) (Homo sapiens (Human)).